The sequence spans 178 residues: Aminoglycoside 2'-N-acetyltransferase (178 aa).

Positions 8-171 (LHTSQLTLSE…VDFTASLYCD (164 aa)) constitute an N-acetyltransferase domain. Substrate-binding positions include Asp-32 and 79 to 80 (EA). CoA contacts are provided by residues 81-83 (MVV) and 88-93 (RRQGIG). Residues Ser-114 and 148–149 (EE) each bind substrate.

The protein belongs to the AAC(2')-I acetyltransferase family. As to quaternary structure, homodimer.

The catalysed reaction is gentamicin C1a + acetyl-CoA = N(2')-acetylgentamicin C1a + CoA + H(+). Functionally, catalyzes the coenzyme A-dependent acetylation of the 2' hydroxyl or amino group of a broad spectrum of aminoglycosides. It confers resistance to aminoglycosides. The polypeptide is Aminoglycoside 2'-N-acetyltransferase (aac) (Providencia stuartii).